A 127-amino-acid chain; its full sequence is UPF0102 protein Mmar10_3014 (127 aa).

This sequence belongs to the UPF0102 family.

The sequence is that of UPF0102 protein Mmar10_3014 from Maricaulis maris (strain MCS10) (Caulobacter maris).